Here is a 1054-residue protein sequence, read N- to C-terminus: CCAAT/enhancer-binding protein zeta (1054 aa).

A compositionally biased stretch (basic and acidic residues) spans 1–20; the sequence is MAAVKEPLEFHAKRPWRPEE. Disordered regions lie at residues 1–42 and 102–160; these read MAAV…GFSL and VEED…PKVK. Residues 21-34 are compositionally biased toward acidic residues; the sequence is AVEDPDEEDEDNTS. Basic and acidic residues predominate over residues 109–120; that stretch reads EKENSSKKEVKI. At S113 the chain carries Phosphoserine. Positions 124–138 are enriched in polar residues; the sequence is NNKNTAESQRTSVNK. S629 is subject to Phosphoserine. The residue at position 695 (K695) is an N6-acetyllysine. S835 is modified (phosphoserine). Disordered stretches follow at residues 873-902 and 915-969; these read RTKGAKDNTLDEDSEGSDDELGNLDDDEVS and DEDG…KKRN. 2 stretches are compositionally biased toward acidic residues: residues 882-902 and 915-933; these read LDEDSEGSDDELGNLDDDEVS and DEDGGTFMDVLDDESESVP. A phosphoserine mark is found at S959, S973, and S978. Residues 1031 to 1054 are disordered; the sequence is IIKKKKHFKKKRIKTTQKTKKQRK.

It belongs to the CBF/MAK21 family.

The protein resides in the nucleus. Its function is as follows. Stimulates transcription from the HSP70 promoter. This Homo sapiens (Human) protein is CCAAT/enhancer-binding protein zeta (CEBPZ).